A 415-amino-acid polypeptide reads, in one-letter code: Nacrein-like protein C2 (415 aa).

A glycan (N-linked (GlcNAc...) asparagine) is linked at asparagine 27. The Alpha-carbonic anhydrase domain occupies 33-414; it reads AGFSYDRSIC…KNKVTVYKSF (382 aa). The Zn(2+) site is built by histidine 132, histidine 134, and histidine 157. The segment at 201–297 is disordered; that stretch reads DEPDDEECKH…GENGHKHGCR (97 aa). Positions 207-219 are enriched in basic and acidic residues; sequence ECKHILKGHHPDN. Residues 220–289 show a composition bias toward low complexity; the sequence is NENGNGDNGN…NNGENGNNGE (70 aa). Tandem repeats lie at residues 225-227, 228-230, 231-233, 234-236, 237-239, 240-242, 243-245, 246-248, 249-251, 252-254, 255-257, 258-260, 261-263, 264-266, 267-269, 270-272, 273-275, 276-278, 279-281, 282-284, 285-286, and 288-290. The tract at residues 225 to 290 is 27 X 3 AA approximate tandem repeats of G-X-N; that stretch reads GDNGNNGYNG…NGENGNNGEN (66 aa). 355 to 356 is a substrate binding site; it reads TT.

This sequence belongs to the alpha-carbonic anhydrase family. As to quaternary structure, homooligomer; disulfide-linked. May also be disulfide-linked to insoluble organic matrix. Requires Zn(2+) as cofactor. Expressed in the mantle.

The protein resides in the secreted. It is found in the extracellular space. It localises to the extracellular matrix. It catalyses the reaction hydrogencarbonate + H(+) = CO2 + H2O. Functionally, acts as a negative regulator for calcification in the shells of mollusks. May function both as a calcium concentrator and as a carbonic anhydrase required for production of carbonate ions, which are assembled to CaCO(3) at mineralization sites. Is important for shell formation in both the calcitic prismatic layer and the aragonitic nacreous layer. Shows inhibitory activity of crystal formation when present in free state but, when attached to the insoluble matrix, may regulate the form and size of aragonite crystal. In Crassostrea nippona (Iwagaki oyster), this protein is Nacrein-like protein C2.